A 301-amino-acid chain; its full sequence is Probable alpha-L-glutamate ligase (301 aa).

The 184-residue stretch at 104–287 folds into the ATP-grasp domain; the sequence is LQLLSRKGIG…VAGMIVEFIE (184 aa). ATP contacts are provided by residues Lys-141, 178–179, Asp-187, and 211–213; these read EF and RSN. Mg(2+) is bound by residues Asp-248, Glu-260, and Asn-262. The Mn(2+) site is built by Asp-248, Glu-260, and Asn-262.

Belongs to the RimK family. It depends on Mg(2+) as a cofactor. Mn(2+) is required as a cofactor.

The chain is Probable alpha-L-glutamate ligase from Teredinibacter turnerae (strain ATCC 39867 / T7901).